A 308-amino-acid polypeptide reads, in one-letter code: UPF0026 protein HP_0117 (308 aa).

The Radical SAM core domain maps to 18 to 248 (FGKSLGVDLS…SLPKRSITQA (231 aa)). C33, C37, and C40 together coordinate [4Fe-4S] cluster.

This sequence belongs to the UPF0026 family. Requires [4Fe-4S] cluster as cofactor.

This Helicobacter pylori (strain ATCC 700392 / 26695) (Campylobacter pylori) protein is UPF0026 protein HP_0117.